A 106-amino-acid polypeptide reads, in one-letter code: V-type proton ATPase subunit G2 (106 aa).

Residue M1 is modified to N-acetylmethionine. Residues 31–67 are disordered; sequence LKQAKEEAETEVAEHKTSTEQGFQRKLEATSGDSGAN. A compositionally biased stretch (basic and acidic residues) spans 33 to 58; sequence QAKEEAETEVAEHKTSTEQGFQRKLE.

The protein belongs to the V-ATPase G subunit family. As to quaternary structure, V-ATPase is a heteromultimeric enzyme composed of a peripheral catalytic V1 complex (components A to H) attached to an integral membrane V0 proton pore complex (components: a, c, c'', d and e).

The protein resides in the vacuole membrane. In terms of biological role, catalytic subunit of the peripheral V1 complex of vacuolar ATPase (V-ATPase). V-ATPase is responsible for acidifying a variety of intracellular compartments in eukaryotic cells. This chain is V-type proton ATPase subunit G2 (VHA-G2), found in Arabidopsis thaliana (Mouse-ear cress).